A 178-amino-acid chain; its full sequence is ATP-dependent protease subunit HslV (178 aa).

The active site involves Thr-7. The Na(+) site is built by Gly-162, Cys-165, and Thr-168.

It belongs to the peptidase T1B family. HslV subfamily. As to quaternary structure, a double ring-shaped homohexamer of HslV is capped on each side by a ring-shaped HslU homohexamer. The assembly of the HslU/HslV complex is dependent on binding of ATP.

It localises to the cytoplasm. The catalysed reaction is ATP-dependent cleavage of peptide bonds with broad specificity.. Allosterically activated by HslU binding. In terms of biological role, protease subunit of a proteasome-like degradation complex believed to be a general protein degrading machinery. The sequence is that of ATP-dependent protease subunit HslV from Burkholderia lata (strain ATCC 17760 / DSM 23089 / LMG 22485 / NCIMB 9086 / R18194 / 383).